The following is a 311-amino-acid chain: MQEIQKNTKKEQYNLNKLQKRLRRNVGEAIADFNMIEEGDRIMVCLSGGKDSYTMLEILRNLQQSAPINFSLVAVNLDQKQPGFPEHILPAYLEQLGVEYKIVEENTYGIVKEKIPEGKTTCSLCSRLRRGILYRTATELGATKIALGHHRDDILQTLFLNMFYGGKMKGMPPKLMSDDGKHIVIRPLAYCREKDIVRFAEAKAFPIIPCNLCGSQPNLQRQVIADMLRDWDKRYPGRIETMFSAMQNVVPSHLCDTNLFDFKGITHGSEVVDGGDLAFDREEIPLQPAGWQPEEDDTSLEALRLDVIEVK.

The PP-loop motif signature appears at 47-52; sequence SGGKDS. Cysteine 122, cysteine 125, and cysteine 213 together coordinate [4Fe-4S] cluster.

The protein belongs to the TtcA family. In terms of assembly, homodimer. It depends on Mg(2+) as a cofactor. [4Fe-4S] cluster serves as cofactor.

It is found in the cytoplasm. The enzyme catalyses cytidine(32) in tRNA + S-sulfanyl-L-cysteinyl-[cysteine desulfurase] + AH2 + ATP = 2-thiocytidine(32) in tRNA + L-cysteinyl-[cysteine desulfurase] + A + AMP + diphosphate + H(+). The protein operates within tRNA modification. Its function is as follows. Catalyzes the ATP-dependent 2-thiolation of cytidine in position 32 of tRNA, to form 2-thiocytidine (s(2)C32). The sulfur atoms are provided by the cysteine/cysteine desulfurase (IscS) system. The sequence is that of tRNA-cytidine(32) 2-sulfurtransferase from Salmonella heidelberg (strain SL476).